We begin with the raw amino-acid sequence, 227 residues long: Phosphoribosylformylglycinamidine synthase subunit PurQ (227 aa).

A Glutamine amidotransferase type-1 domain is found at 2-227 (RWAIVRFPGA…FLGLVREVAR (226 aa)). Cysteine 85 (nucleophile) is an active-site residue. Residues histidine 200 and glutamate 202 contribute to the active site.

In terms of assembly, part of the FGAM synthase complex composed of 1 PurL, 1 PurQ and 2 PurS subunits.

Its subcellular location is the cytoplasm. It carries out the reaction N(2)-formyl-N(1)-(5-phospho-beta-D-ribosyl)glycinamide + L-glutamine + ATP + H2O = 2-formamido-N(1)-(5-O-phospho-beta-D-ribosyl)acetamidine + L-glutamate + ADP + phosphate + H(+). The enzyme catalyses L-glutamine + H2O = L-glutamate + NH4(+). It participates in purine metabolism; IMP biosynthesis via de novo pathway; 5-amino-1-(5-phospho-D-ribosyl)imidazole from N(2)-formyl-N(1)-(5-phospho-D-ribosyl)glycinamide: step 1/2. Its function is as follows. Part of the phosphoribosylformylglycinamidine synthase complex involved in the purines biosynthetic pathway. Catalyzes the ATP-dependent conversion of formylglycinamide ribonucleotide (FGAR) and glutamine to yield formylglycinamidine ribonucleotide (FGAM) and glutamate. The FGAM synthase complex is composed of three subunits. PurQ produces an ammonia molecule by converting glutamine to glutamate. PurL transfers the ammonia molecule to FGAR to form FGAM in an ATP-dependent manner. PurS interacts with PurQ and PurL and is thought to assist in the transfer of the ammonia molecule from PurQ to PurL. The polypeptide is Phosphoribosylformylglycinamidine synthase subunit PurQ (Thermus thermophilus (strain ATCC BAA-163 / DSM 7039 / HB27)).